We begin with the raw amino-acid sequence, 151 residues long: Putative pre-16S rRNA nuclease (151 aa).

Belongs to the YqgF nuclease family.

It is found in the cytoplasm. Functionally, could be a nuclease involved in processing of the 5'-end of pre-16S rRNA. This is Putative pre-16S rRNA nuclease from Nostoc sp. (strain PCC 7120 / SAG 25.82 / UTEX 2576).